We begin with the raw amino-acid sequence, 262 residues long: MEMKKRLTLELRNKKPGEVKELVLDNCRSDDGKIVGLSSDFENLEFLSMINVNLLSISNLPKLNKLRKLELSDNRISGGLEVLAERTPNLTHLNLSGNKIKDINTLEPLKKLPNLHSLDLFNCEVTMLINYRESVFTLLPQLTYLDGFDADEQEAPDSDPEADGDGLEDEYENGEGEEEEDDDEEDDLDEEVIDEEDDEDDDLEGEEEEDGVDDEEEDEEEDGEDEEDDEADDDLPRGEKRKRNLEDEGEEDPEDEEDDEDD.

4 LRR repeats span residues 16 to 40, 43 to 64, 65 to 87, and 89 to 110; these read PGEV…LSSD, NLEF…PKLN, KLRK…AERT, and NLTH…EPLK. In terms of domain architecture, LRRCT spans 123–161; the sequence is CEVTMLINYRESVFTLLPQLTYLDGFDADEQEAPDSDPE. The segment covering 150–233 has biased composition (acidic residues); that stretch reads ADEQEAPDSD…EDEEDDEADD (84 aa). The disordered stretch occupies residues 150-262; sequence ADEQEAPDSD…PEDEEDDEDD (113 aa). The short motif at 240 to 243 is the Nuclear localization signal element; it reads KRKR. The span at 247-262 shows a compositional bias: acidic residues; that stretch reads DEGEEDPEDEEDDEDD.

The protein belongs to the ANP32 family. Interacts with histones H3 and H4. Interacts with KLF5; this interaction induces promoter region-specific histone incorporation and inhibition of histone acetylation by ANP32B. Directly cleaved by caspase-3/CASP3.

It is found in the nucleus. Functionally, multifunctional protein that is involved in the regulation of many processes including cell proliferation, apoptosis, cell cycle progression or transcription. Regulates the proliferation of neuronal stem cells, differentiation of leukemic cells and progression from G1 to S phase of the cell cycle. As negative regulator of caspase-3-dependent apoptosis, may act as an antagonist of ANP32A in regulating tissue homeostasis. Exhibits histone chaperone properties, able to recruit histones to certain promoters, thus regulating the transcription of specific genes. Also plays an essential role in the nucleocytoplasmic transport of specific mRNAs via the uncommon nuclear mRNA export receptor XPO1/CRM1. In Gallus gallus (Chicken), this protein is Acidic leucine-rich nuclear phosphoprotein 32 family member B (ANP32B).